The following is a 350-amino-acid chain: MAAPALRVVRVYLDGAHGLGKTTTGRALAAAASAAGGPVLFFPEPMAYWRTMFPTDALSGILAASARRAAAQGGRADADAAGLVAYYQARFAAPYLVLHARVAALLAPPEPAPGGDDVVTLVFDRHPLAACLCYPFARYCLREINAEDLLALAATAPLEAPGANLVVCTLPPAEQQRRLAARARPGDRADAGFWPPLRNAYALLANTCAFLGAGGAWRDGWDALGWADADALAALADPRGGGREPVPAPALRDTLFAALKCRELYPGGGADLPAVHAWALDALADRLAALEVFMDVSAAPDACAAAVLGMRPAMRRRRADGAAGATLADLARRFAREMTPGGPEAAPRGL.

Position 15–22 (15–22) interacts with ATP; it reads GAHGLGKT. Glu44 (proton acceptor) is an active-site residue. A substrate-binding site is contributed by Gln88. Arg178 is a binding site for ATP. Residue Arg184 coordinates substrate.

It belongs to the herpesviridae thymidine kinase family. In terms of assembly, homodimer.

It catalyses the reaction thymidine + ATP = dTMP + ADP + H(+). Functionally, catalyzes the transfer of the gamma-phospho group of ATP to thymidine to generate dTMP in the salvage pathway of pyrimidine synthesis. The dTMP serves as a substrate for DNA polymerase during viral DNA replication. Allows the virus to be reactivated and to grow in non-proliferative cells lacking a high concentration of phosphorylated nucleic acid precursors. This Bos taurus (Bovine) protein is Thymidine kinase.